We begin with the raw amino-acid sequence, 1407 residues long: DNA-directed RNA polymerase subunit beta' (1407 aa).

Residues cysteine 70, cysteine 72, cysteine 85, and cysteine 88 each coordinate Zn(2+). Residues aspartate 460, aspartate 462, and aspartate 464 each coordinate Mg(2+). Residues cysteine 814, cysteine 888, cysteine 895, and cysteine 898 each coordinate Zn(2+). An N6-acetyllysine modification is found at lysine 972.

This sequence belongs to the RNA polymerase beta' chain family. The RNAP catalytic core consists of 2 alpha, 1 beta, 1 beta' and 1 omega subunit. When a sigma factor is associated with the core the holoenzyme is formed, which can initiate transcription. It depends on Mg(2+) as a cofactor. Zn(2+) serves as cofactor.

It catalyses the reaction RNA(n) + a ribonucleoside 5'-triphosphate = RNA(n+1) + diphosphate. Its function is as follows. DNA-dependent RNA polymerase catalyzes the transcription of DNA into RNA using the four ribonucleoside triphosphates as substrates. In Escherichia coli O1:K1 / APEC, this protein is DNA-directed RNA polymerase subunit beta'.